A 350-amino-acid chain; its full sequence is Sterol-4-alpha-carboxylate 3-dehydrogenase ERG26, decarboxylating (350 aa).

Residues 12–18, 63–64, and 85–87 contribute to the NADP(+) site; these read GGSGFLG, DL, and SAS. Residues Ser125 and Tyr152 each coordinate substrate. Residues Tyr152, Lys156, and 179–182 contribute to the NADP(+) site; that span reads PAGI. Lys156 functions as the Proton donor in the catalytic mechanism.

This sequence belongs to the 3-beta-HSD family. Heterotetramer of ERG25, ERG26, ERG27 and ERG28. ERG28 acts as a scaffold to tether ERG27 and other 4,4-demethylation-related enzymes, forming a demethylation enzyme complex, in the endoplasmic reticulum.

The protein resides in the endoplasmic reticulum membrane. It catalyses the reaction 4beta-methylzymosterol-4alpha-carboxylate + NADP(+) = 3-dehydro-4-methylzymosterol + CO2 + NADPH. It participates in steroid biosynthesis; zymosterol biosynthesis; zymosterol from lanosterol: step 4/6. Functionally, sterol-4-alpha-carboxylate 3-dehydrogenase; part of the third module of ergosterol biosynthesis pathway that includes the late steps of the pathway. ERG26 is a catalytic component of the C-4 demethylation complex that catalyzes the oxidative decarboxylation that results in a reduction of the 3-beta-hydroxy group at the C-3 carbon to an oxo group. The third module or late pathway involves the ergosterol synthesis itself through consecutive reactions that mainly occur in the endoplasmic reticulum (ER) membrane. Firstly, the squalene synthase ERG9 catalyzes the condensation of 2 farnesyl pyrophosphate moieties to form squalene, which is the precursor of all steroids. Squalene synthase is crucial for balancing the incorporation of farnesyl diphosphate (FPP) into sterol and nonsterol isoprene synthesis. Secondly, the squalene epoxidase ERG1 catalyzes the stereospecific oxidation of squalene to (S)-2,3-epoxysqualene, which is considered to be a rate-limiting enzyme in steroid biosynthesis. Then, the lanosterol synthase ERG7 catalyzes the cyclization of (S)-2,3 oxidosqualene to lanosterol, a reaction that forms the sterol core. In the next steps, lanosterol is transformed to zymosterol through a complex process involving various demethylation, reduction and desaturation reactions. The lanosterol 14-alpha-demethylase ERG11 (also known as CYP51) catalyzes C14-demethylation of lanosterol to produce 4,4'-dimethyl cholesta-8,14,24-triene-3-beta-ol, which is critical for ergosterol biosynthesis. The C-14 reductase ERG24 reduces the C14=C15 double bond of 4,4-dimethyl-cholesta-8,14,24-trienol to produce 4,4-dimethyl-cholesta-8,24-dienol. 4,4-dimethyl-cholesta-8,24-dienol is substrate of the C-4 demethylation complex ERG25-ERG26-ERG27 in which ERG25 catalyzes the three-step monooxygenation required for the demethylation of 4,4-dimethyl and 4alpha-methylsterols, ERG26 catalyzes the oxidative decarboxylation that results in a reduction of the 3-beta-hydroxy group at the C-3 carbon to an oxo group, and ERG27 is responsible for the reduction of the keto group on the C-3. ERG28 has a role as a scaffold to help anchor ERG25, ERG26 and ERG27 to the endoplasmic reticulum and ERG29 regulates the activity of the iron-containing C4-methylsterol oxidase ERG25. Then, the sterol 24-C-methyltransferase ERG6 catalyzes the methyl transfer from S-adenosyl-methionine to the C-24 of zymosterol to form fecosterol. The C-8 sterol isomerase ERG2 catalyzes the reaction which results in unsaturation at C-7 in the B ring of sterols and thus converts fecosterol to episterol. The sterol-C5-desaturase ERG3 then catalyzes the introduction of a C-5 double bond in the B ring to produce 5-dehydroepisterol. The C-22 sterol desaturase ERG5 further converts 5-dehydroepisterol into ergosta-5,7,22,24(28)-tetraen-3beta-ol by forming the C-22(23) double bond in the sterol side chain. Finally, ergosta-5,7,22,24(28)-tetraen-3beta-ol is substrate of the C-24(28) sterol reductase ERG4 to produce ergosterol. The sequence is that of Sterol-4-alpha-carboxylate 3-dehydrogenase ERG26, decarboxylating from Candida albicans (strain SC5314 / ATCC MYA-2876) (Yeast).